A 554-amino-acid chain; its full sequence is Rab GTPase-binding effector protein 2 (554 aa).

Disordered regions lie at residues 1-28, 167-208, and 371-395; these read MAAA…SELS, IQRR…GPAA, and GLRA…DEAL. A compositionally biased stretch (basic and acidic residues) spans 14–28; the sequence is PQEKQKDASESSELS. The stretch at 15 to 173 forms a coiled coil; the sequence is QEKQKDASES…IQEIQRRPRQ (159 aa). Ser176, Ser180, Ser187, and Ser191 each carry phosphoserine. Residues 274 to 509 are a coiled coil; it reads DSQWEQLQVE…QAELETSEQV (236 aa).

Belongs to the rabaptin family. In terms of assembly, heterodimer with RABGEF1. The dimer binds RAB5A that has been activated by GTP-binding. Interacts with SDCCAG8; this interaction is important for ciliogenesis regulation. Interacts with RAB4A; this interaction may mediate VEGFR2 cell surface expression.

The protein localises to the cytoplasm. It localises to the early endosome. Its subcellular location is the cytoskeleton. The protein resides in the microtubule organizing center. It is found in the centrosome. The protein localises to the cilium basal body. Plays a role in membrane trafficking and in homotypic early endosome fusion. Participates in arteriogenesis by regulating vascular endothelial growth factor receptor 2/VEGFR2 cell surface expression and endosomal trafficking. By interacting with SDCCAG8, localizes to centrosomes and plays a critical role in ciliogenesis. This is Rab GTPase-binding effector protein 2 (Rabep2) from Mus musculus (Mouse).